Here is a 519-residue protein sequence, read N- to C-terminus: Putative glucosylceramidase 4 (519 aa).

Positions methionine 1–serine 24 are cleaved as a signal peptide. Catalysis depends on glutamate 256, which acts as the Proton donor. The active-site Nucleophile is the glutamate 361.

This sequence belongs to the glycosyl hydrolase 30 family.

It carries out the reaction a beta-D-glucosylceramide + H2O = an N-acyl-sphingoid base + D-glucose. It catalyses the reaction a beta-D-glucosyl-(1&lt;-&gt;1')-N-acylsphing-4-enine + H2O = an N-acylsphing-4-enine + D-glucose. The catalysed reaction is an N-acyl-1-beta-D-glucosyl-15-methylhexadecasphing-4-enine + H2O = an N-acyl-15-methylhexadecasphing-4-enine + D-glucose. Its pathway is lipid metabolism; sphingolipid metabolism. Its function is as follows. Glucosylceramidase that catalyzes the hydrolysis of glucosylceramides into free ceramides and glucose. C.elegans contains specific sphingoid bases, which are unique or different in structure compared to the sphingoid bases found in other animals. Two examples of these distinctive compounds are: 15-methylhexadecasphinganine and 15-methylhexadecasphing-4-enine. The polypeptide is Putative glucosylceramidase 4 (gba-4) (Caenorhabditis elegans).